The following is an 869-amino-acid chain: Ribonucleoside-diphosphate reductase large chain 2 (869 aa).

The region spanning 1–92 (MYVIKRDGRK…ISNLHKQTTK (92 aa)) is the ATP-cone domain. Residues 5–6 (KR), 11–17 (EPVQFDK), Thr-53, and Asp-57 each bind ATP. 2 residues coordinate GDP: Ser-202 and Ser-217. Residues Cys-218 and Cys-443 are joined by a disulfide bond. Residues 226–228 (DSI), Lys-243, Arg-256, and 263–264 (AG) each bind dTTP. A Phosphoserine modification is found at Ser-227. Lys-387 participates in a covalent cross-link: Glycyl lysine isopeptide (Lys-Gly) (interchain with G-Cter in ubiquitin). GDP is bound at residue Asn-426. The active-site Proton acceptor is Asn-426. Residue Cys-428 is the Cysteine radical intermediate of the active site. GDP-binding positions include Glu-430 and 608 to 611 (TAST). Glu-430 serves as the catalytic Proton acceptor. The segment at 793–843 (SALTESSDNEKDASPVPSEQSSVSSAMSNVKLEDSVAPAVPTETIKEDSDE) is disordered. Phosphoserine is present on residues Ser-806, Ser-827, and Ser-868. Over residues 806-820 (SPVPSEQSSVSSAMS) the composition is skewed to low complexity.

Belongs to the ribonucleoside diphosphate reductase large chain family. In terms of assembly, heterotetramer of two large (R1) and two small (R2) subunits. S.cerevisiae has two different R1 subunits (RNR1 and RNR3) and two different R2 subunits (RNR2 and RNR4). The functional form of the small subunits is a RNR2-RNR4 heterodimer, where RNR2 provides the iron-radical center and RNR4 is required for proper folding of RNR2 and assembly with the large subunits. Under normal growth conditions, the active form of the large subunits is a homodimer of the constitutively expressed RNR1. In damaged cells or cells arrested for DNA synthesis, the reductase consists of multiple species because of the association of the small subunits (RNR2-RNR4) with either the RNR1 homodimer or a heterodimer of RNR1 and the damage-inducible RNR3.

The protein resides in the cytoplasm. It catalyses the reaction a 2'-deoxyribonucleoside 5'-diphosphate + [thioredoxin]-disulfide + H2O = a ribonucleoside 5'-diphosphate + [thioredoxin]-dithiol. With respect to regulation, under complex allosteric control mediated by deoxynucleoside triphosphates and ATP binding to separate specificity and activation sites on the large subunit. The type of nucleotide bound at the specificity site determines substrate preference. It seems probable that ATP makes the enzyme reduce CDP and UDP, dGTP favors ADP reduction and dTTP favors GDP reduction. Stimulated by ATP and inhibited by dATP binding to the activity site. Provides the precursors necessary for DNA synthesis. Catalyzes the biosynthesis of deoxyribonucleotides from the corresponding ribonucleotides. This chain is Ribonucleoside-diphosphate reductase large chain 2 (RNR3), found in Saccharomyces cerevisiae (strain ATCC 204508 / S288c) (Baker's yeast).